The chain runs to 292 residues: F-box only protein 16 (292 aa).

In terms of domain architecture, F-box spans 86 to 132; sequence LDFTTKLPRVLSLYIFSFLDPRSLCRCAQVCWHWKNLAELDQLWMLK. Disordered regions lie at residues 188–224 and 238–292; these read SPEEKQSPLSAFRSSSSLRKKNNSGEKALPPWRSSDK and RDPM…PLCP. A compositionally biased stretch (low complexity) spans 194–204; sequence SPLSAFRSSSS. The segment covering 260-273 has biased composition (basic and acidic residues); the sequence is RQSHDKKNKLQDRT.

As to quaternary structure, part of a SCF (SKP1-cullin-F-box) protein ligase complex. In terms of tissue distribution, expressed in heart, spleen and colon.

In terms of biological role, probably recognizes and binds to some phosphorylated proteins and promotes their ubiquitination and degradation. The protein is F-box only protein 16 (FBXO16) of Homo sapiens (Human).